The chain runs to 512 residues: Maturase K (512 aa).

This sequence belongs to the intron maturase 2 family. MatK subfamily.

It is found in the plastid. Its subcellular location is the chloroplast. Usually encoded in the trnK tRNA gene intron. Probably assists in splicing its own and other chloroplast group II introns. The chain is Maturase K from Ginkgo biloba (Ginkgo).